The primary structure comprises 149 residues: D-aminoacyl-tRNA deacylase (149 aa).

Residues 137 to 138 (GP) carry the Gly-cisPro motif, important for rejection of L-amino acids motif.

Belongs to the DTD family. Homodimer.

The protein resides in the cytoplasm. It carries out the reaction glycyl-tRNA(Ala) + H2O = tRNA(Ala) + glycine + H(+). The catalysed reaction is a D-aminoacyl-tRNA + H2O = a tRNA + a D-alpha-amino acid + H(+). Its function is as follows. An aminoacyl-tRNA editing enzyme that deacylates mischarged D-aminoacyl-tRNAs. Also deacylates mischarged glycyl-tRNA(Ala), protecting cells against glycine mischarging by AlaRS. Acts via tRNA-based rather than protein-based catalysis; rejects L-amino acids rather than detecting D-amino acids in the active site. By recycling D-aminoacyl-tRNA to D-amino acids and free tRNA molecules, this enzyme counteracts the toxicity associated with the formation of D-aminoacyl-tRNA entities in vivo and helps enforce protein L-homochirality. This is D-aminoacyl-tRNA deacylase from Caldicellulosiruptor saccharolyticus (strain ATCC 43494 / DSM 8903 / Tp8T 6331).